We begin with the raw amino-acid sequence, 218 residues long: Ras-related protein R-Ras (218 aa).

A disordered region spans residues 1-30 (MSSGAASGTGRGRPRGGGPGPRDPPPGETH). Over residues 7–20 (SGTGRGRPRGGGPG) the composition is skewed to gly residues. 36–44 (GGGGVGKSA) is a binding site for GTP. An Effector region motif is present at residues 58 to 66 (YDPTIEDSY). GTP contacts are provided by residues 83–87 (DTAGQ), 142–145 (NKAD), and 172–174 (SAK). Cys-215 carries the post-translational modification Cysteine methyl ester. The S-geranylgeranyl cysteine moiety is linked to residue Cys-215. The propeptide at 216-218 (VLL) is removed in mature form.

The protein belongs to the small GTPase superfamily. Ras family. Interacts with PLCE1. Interacts (active GTP-bound form preferentially) with RGS14. Interacts with OSBPL3. Interacts with ZDHHC19. In terms of processing, S-palmitoylated by ZDHHC19, leading to increased association with membranes and with rafts/caveolae as well as enhanced cell viability.

The protein resides in the cell membrane. It carries out the reaction GTP + H2O = GDP + phosphate + H(+). GTP-binding protein with GTPase activity, likely involved in the regulation of MAPK signaling pathway and thereby controlling multiple cellular processes. Regulates the organization of the actin cytoskeleton. With OSPBL3, modulates integrin beta-1 (ITGB1) activity. This chain is Ras-related protein R-Ras (Rras), found in Rattus norvegicus (Rat).